The chain runs to 229 residues: MKPRTPPDSPQLFQAVPLVPDFRLELKARKAGHWPVAGADEAGRGPLAGPVVAAAVILDPKRIPEGLNDSKQLSAQRREELFVQILATATVSIASSSSTRIDETDIRKASLDAMRRAICSLAIPASYVLTDGLDVPPGLDCPGQAVIKGDARSVSIAAASIVAKVTRDRMMARAHHVFPDYGFAAHVGYGTAQHRAGIEKLGPCSLHRMSFRPLRKVEDGPQMDELISE.

An RNase H type-2 domain is found at 34-223 (WPVAGADEAG…LRKVEDGPQM (190 aa)). Residues Asp-40, Glu-41, and Asp-131 each contribute to the a divalent metal cation site.

Belongs to the RNase HII family. The cofactor is Mn(2+). Requires Mg(2+) as cofactor.

Its subcellular location is the cytoplasm. It carries out the reaction Endonucleolytic cleavage to 5'-phosphomonoester.. Its function is as follows. Endonuclease that specifically degrades the RNA of RNA-DNA hybrids. This chain is Ribonuclease HII, found in Rhizobium leguminosarum bv. trifolii (strain WSM2304).